We begin with the raw amino-acid sequence, 597 residues long: Phosphoinositide phosphatase SAC7 (597 aa).

An SAC domain is found at 130–458 (LSVAEKTTGL…GDEISIQYSG (329 aa)). The Phosphatase catalytic core motif lies at 393–404 (RSNCIDCLDRTN). 2 helical membrane-spanning segments follow: residues 528–548 (AVAN…FATM) and 559–579 (HKHL…AALV).

In terms of tissue distribution, ubiquitous.

It localises to the endoplasmic reticulum membrane. The protein localises to the cytoplasmic vesicle membrane. Its function is as follows. Phosphoinositide phosphatase that preferentially hydrolyzes PtdIns(4)P. Regulates the accumulation of PtdIns(4)P on membrane compartments at the tips of growing root hairs leading to proper root hair development. The polypeptide is Phosphoinositide phosphatase SAC7 (SAC7) (Arabidopsis thaliana (Mouse-ear cress)).